The primary structure comprises 263 residues: MGLKVFHWLNRRMHSNTEYCSIHGSKAMEDKDSVPHSVVEKDTEALLLHDVLLNGILAIGTLGHHVDSLCPVACIEEDDLFIMDDEKAIVEERDDEEPRNDQVKEDVALETEPCEPVWPIVEPAKMHSLSMKEDNFTCFVAEEILIREVEDGGGANIQERPLLMLEKVEKVRTTLADLFAAEVFSSSSPREYSCQDIIDVAVASTSKHASCMEKMHQKKPRKPTPKPLKATRKLSRVMRKMLGKKIHPEQLNGRSNAEGPLTA.

The short motif at 55-61 (GILAIGT) is the IGT motif element. The segment at 243–263 (GKKIHPEQLNGRSNAEGPLTA) is disordered.

It belongs to the TAC family. Highly expressed in leaf sheath pulvinus. Expressed in shoot apical meristem and leaves.

Its function is as follows. Involved in the regulation of leaf growth angle. Promotes horizontal shoot growth. This Zea mays (Maize) protein is Protein TILLER ANGLE CONTROL 1.